We begin with the raw amino-acid sequence, 409 residues long: Argininosuccinate synthase (409 aa).

Residues 10–18 (AYSGGLDTS) and A37 each bind ATP. L-citrulline-binding residues include Y90 and S95. ATP is bound at residue G120. The L-aspartate site is built by T122, N126, and D127. L-citrulline is bound at residue N126. L-citrulline-binding residues include R130, S182, S191, E267, and Y279.

It belongs to the argininosuccinate synthase family. Type 1 subfamily. As to quaternary structure, homotetramer.

It localises to the cytoplasm. It carries out the reaction L-citrulline + L-aspartate + ATP = 2-(N(omega)-L-arginino)succinate + AMP + diphosphate + H(+). Its pathway is amino-acid biosynthesis; L-arginine biosynthesis; L-arginine from L-ornithine and carbamoyl phosphate: step 2/3. In Azoarcus sp. (strain BH72), this protein is Argininosuccinate synthase.